A 260-amino-acid polypeptide reads, in one-letter code: Flagellar basal-body rod protein FlgG (260 aa).

Belongs to the flagella basal body rod proteins family. As to quaternary structure, the basal body constitutes a major portion of the flagellar organelle and consists of four rings (L,P,S, and M) mounted on a central rod. The rod consists of about 26 subunits of FlgG in the distal portion, and FlgB, FlgC and FlgF are thought to build up the proximal portion of the rod with about 6 subunits each.

It localises to the bacterial flagellum basal body. This chain is Flagellar basal-body rod protein FlgG (flgG), found in Salmonella typhi.